The following is a 247-amino-acid chain: Exosome complex component Rrp4 (247 aa).

Residues 75 to 148 (DDLVIGIVEN…RDPVITVKGK (74 aa)) form the S1 motif domain. Positions 154–220 (TEGVVVDVKP…QAIKLIELKA (67 aa)) constitute a KH domain.

This sequence belongs to the RRP4 family. Component of the archaeal exosome complex. Forms a trimer of Rrp4 and/or Csl4 subunits. The trimer associates with a hexameric ring-like arrangement composed of 3 Rrp41-Rrp42 heterodimers.

The protein resides in the cytoplasm. Functionally, non-catalytic component of the exosome, which is a complex involved in RNA degradation. Increases the RNA binding and the efficiency of RNA degradation. Confers strong poly(A) specificity to the exosome. The polypeptide is Exosome complex component Rrp4 (Thermosphaera aggregans (strain DSM 11486 / M11TL)).